A 219-amino-acid polypeptide reads, in one-letter code: Octanoyltransferase (219 aa).

Residues 31-219 (EDLPGFLVFC…KLKRRLLEVL (189 aa)) enclose the BPL/LPL catalytic domain. Substrate-binding positions include 69-76 (RGGRATYH), 153-155 (SVG), and 166-168 (GAA). Cys-184 functions as the Acyl-thioester intermediate in the catalytic mechanism.

Belongs to the LipB family.

Its subcellular location is the cytoplasm. The catalysed reaction is octanoyl-[ACP] + L-lysyl-[protein] = N(6)-octanoyl-L-lysyl-[protein] + holo-[ACP] + H(+). It participates in protein modification; protein lipoylation via endogenous pathway; protein N(6)-(lipoyl)lysine from octanoyl-[acyl-carrier-protein]: step 1/2. Functionally, catalyzes the transfer of endogenously produced octanoic acid from octanoyl-acyl-carrier-protein onto the lipoyl domains of lipoate-dependent enzymes. Lipoyl-ACP can also act as a substrate although octanoyl-ACP is likely to be the physiological substrate. In Bdellovibrio bacteriovorus (strain ATCC 15356 / DSM 50701 / NCIMB 9529 / HD100), this protein is Octanoyltransferase.